Reading from the N-terminus, the 93-residue chain is Acylphosphatase (93 aa).

An Acylphosphatase-like domain is found at 5–93 (CIIAWVHGRV…EELTGFRIRY (89 aa)). Catalysis depends on residues R20 and N38.

It belongs to the acylphosphatase family.

The catalysed reaction is an acyl phosphate + H2O = a carboxylate + phosphate + H(+). This is Acylphosphatase (acyP) from Citrobacter koseri (strain ATCC BAA-895 / CDC 4225-83 / SGSC4696).